The primary structure comprises 285 residues: Sulfotransferase 2A1 (285 aa).

6 residues coordinate 3'-phosphoadenylyl sulfate: Lys44, Ser45, Gly46, Thr47, Asn48, and Trp49. Catalysis depends on His99, which acts as the Proton acceptor. Arg121, Ser129, Tyr184, Ser218, Met223, Arg247, Lys248, and Gly249 together coordinate 3'-phosphoadenylyl sulfate. At Ser251 the chain carries Phosphoserine.

It belongs to the sulfotransferase 1 family. Homodimer. Post-translationally, the N-terminus is blocked. Liver, adrenal and at lower level in the kidney. Is present in human fetus in higher level in the adrenal than the liver and the kidney.

The protein localises to the cytoplasm. The enzyme catalyses an alcohol + 3'-phosphoadenylyl sulfate = an alkyl sulfate + adenosine 3',5'-bisphosphate + H(+). It carries out the reaction (24S)-hydroxycholesterol + 3'-phosphoadenylyl sulfate = (24S)-hydroxycholesterol 24-sulfate + adenosine 3',5'-bisphosphate + H(+). It catalyses the reaction (24S)-hydroxycholesterol + 3'-phosphoadenylyl sulfate = (24S)-hydroxycholesterol 3-sulfate + adenosine 3',5'-bisphosphate + H(+). The catalysed reaction is (24S)-hydroxycholesterol 24-sulfate + 3'-phosphoadenylyl sulfate = (24S)-hydroxycholesterol 3,24-disulfate + adenosine 3',5'-bisphosphate + H(+). The enzyme catalyses 3beta-hydroxyandrost-5-en-17-one + 3'-phosphoadenylyl sulfate = dehydroepiandrosterone 3-sulfate + adenosine 3',5'-bisphosphate + H(+). It carries out the reaction pregnenolone + 3'-phosphoadenylyl sulfate = pregnenolone sulfate + adenosine 3',5'-bisphosphate + H(+). It catalyses the reaction androsterone + 3'-phosphoadenylyl sulfate = androsterone 3alpha-sulfate + adenosine 3',5'-bisphosphate + H(+). The catalysed reaction is taurolithocholate + 3'-phosphoadenylyl sulfate = taurolithocholate 3-sulfate + adenosine 3',5'-bisphosphate + H(+). The enzyme catalyses lithocholate + 3'-phosphoadenylyl sulfate = lithocholate sulfate + adenosine 3',5'-bisphosphate + H(+). With respect to regulation, subject to substrate inhibition. Alternate orientations for binding of steroid substrates to SULT2A1 may play a role in substrate inhibition. In terms of biological role, sulfotransferase that utilizes 3'-phospho-5'-adenylyl sulfate (PAPS) as sulfonate donor to catalyze the sulfonation of steroids and bile acids in the liver and adrenal glands. Mediates the sulfation of a wide range of steroids and sterols, including pregnenolone, androsterone, DHEA, bile acids, cholesterol and as well many xenobiotics that contain alcohol and phenol functional groups. Sulfonation increases the water solubility of most compounds, and therefore their renal excretion, but it can also result in bioactivation to form active metabolites. Plays an important role in maintening steroid and lipid homeostasis. Plays a key role in bile acid metabolism. In addition, catalyzes the metabolic activation of potent carcinogenic polycyclic arylmethanols. In Homo sapiens (Human), this protein is Sulfotransferase 2A1 (SULT2A1).